The chain runs to 909 residues: Protein virilizer (909 aa).

The span at S746 to E784 shows a compositional bias: polar residues. Residues S746 to L824 are disordered. Residues S785–S799 are compositionally biased toward low complexity. Polar residues predominate over residues M800–F810. Over residues N811 to L824 the composition is skewed to low complexity. S856 and S898 each carry phosphoserine.

This sequence belongs to the vir family. In terms of assembly, component of the MIS (mRNA N6-methyladenosine (m6A) methylation) complex, at least composed of IME4, KAR4, MUM2, SLZ1, and VIR1. Interacts with KAR4. Interacts with SLZ1. Interacts with MUM2. Interacts with IME4.

Its subcellular location is the cytoplasm. It is found in the nucleus. It localises to the nucleolus. In terms of biological role, component of the MIS complex, a complex that mediates N6-methyladenosine (m6A) methylation of meiotic mRNAs and is required for initiation of meiosis, progression through the meiotic divisions and sporulation. In the complex, performs a scaffolding role stabilizing the other complex members. The polypeptide is Protein virilizer (Saccharomyces cerevisiae (strain ATCC 204508 / S288c) (Baker's yeast)).